The primary structure comprises 1690 residues: Restin homolog (1690 aa).

2 stretches are compositionally biased toward polar residues: residues 1 to 11 (MSDDTSASGGT) and 39 to 51 (NIPTPATSGTGIP). The tract at residues 1 to 105 (MSDDTSASGG…ESDDNLSSIN (105 aa)) is disordered. A phosphoserine mark is found at serine 64 and serine 67. A CAP-Gly 1 domain is found at 143–185 (GDTHFAAGEWAGVVLDEPNGKNDGCVSGKRYFQCEPKRGIFSR). Positions 195–227 (AGAQTPTSPLAKSSPDRSRTVSPTASIRSSMLR) are disordered. Positions 214–226 (TVSPTASIRSSML) are enriched in polar residues. Serine 216 is subject to Phosphoserine. The region spanning 260–302 (GETQFAPGNWCGVELDEPSGKNDGTVDDIRYFECKPKYGVFVP) is the CAP-Gly 2 domain. Serine 309, serine 322, and serine 325 each carry phosphoserine. Threonine 327 carries the phosphothreonine modification. Serine 328 carries the phosphoserine modification. A Phosphothreonine modification is found at threonine 362. Coiled-coil stretches lie at residues 378–468 (QHVE…VSAT), 484–660 (GALQ…DMLR), 667–916 (EEKS…TKLK), 926–981 (LSSC…ELQA), 1001–1121 (ATGH…EAIQ), 1158–1549 (EADM…AQMN), and 1565–1600 (DIETSLAKINFLNSIIADMQQKNDALKAKVQTLETL). Positions 843-905 (QQAAASGEEG…GSLEEEAKKS (63 aa)) are disordered. Over residues 865–885 (QLKSQAEETQSELKSTQSNLE) the composition is skewed to polar residues. 2 disordered regions span residues 1031–1052 (QLQDSQDSQTKLKAEGERKEKS) and 1400–1419 (KLDESNTVLESQKKSHNEIQ). Composition is skewed to basic and acidic residues over residues 1040 to 1052 (TKLKAEGERKEKS) and 1410 to 1419 (SQKKSHNEIQ). Residues 1635-1665 (TEDCPIQGSEDQDYSTPSSESNNNEKERKLP) form a disordered region. Position 1681 is a phosphothreonine (threonine 1681). Serine 1682 bears the Phosphoserine mark.

In terms of assembly, interacts with Lva. Specifically expressed at the tip of the furrow in cellularizing blastoderms. CLIP-190 and jar are coexpressed at several times in development and in a number of tissues, including embryonic axonal neuron processes and posterior pole.

Its subcellular location is the cytoplasm. The protein resides in the cytoskeleton. It is found in the golgi apparatus. The protein localises to the microtubule organizing center. It localises to the perinuclear region. Its function is as follows. Together CLIP-190 and jar may coordinate the interaction between the actin and microtubule cytoskeleton. May link endocytic vesicles to microtubules. May play a role in formation of furrows during cellularization. This chain is Restin homolog (CLIP-190), found in Drosophila melanogaster (Fruit fly).